The following is a 243-amino-acid chain: NAD(P)H-quinone oxidoreductase subunit K, chloroplastic (243 aa).

Residues C65, C66, C130, and C161 each contribute to the [4Fe-4S] cluster site.

Belongs to the complex I 20 kDa subunit family. NDH is composed of at least 16 different subunits, 5 of which are encoded in the nucleus. It depends on [4Fe-4S] cluster as a cofactor.

The protein localises to the plastid. It localises to the chloroplast thylakoid membrane. It carries out the reaction a plastoquinone + NADH + (n+1) H(+)(in) = a plastoquinol + NAD(+) + n H(+)(out). The enzyme catalyses a plastoquinone + NADPH + (n+1) H(+)(in) = a plastoquinol + NADP(+) + n H(+)(out). Its function is as follows. NDH shuttles electrons from NAD(P)H:plastoquinone, via FMN and iron-sulfur (Fe-S) centers, to quinones in the photosynthetic chain and possibly in a chloroplast respiratory chain. The immediate electron acceptor for the enzyme in this species is believed to be plastoquinone. Couples the redox reaction to proton translocation, and thus conserves the redox energy in a proton gradient. This Marchantia polymorpha (Common liverwort) protein is NAD(P)H-quinone oxidoreductase subunit K, chloroplastic.